A 365-amino-acid polypeptide reads, in one-letter code: 3-dehydroquinate synthase (365 aa).

Residues 75-80 (DAENGK), 109-113 (GAATD), 133-134 (TT), lysine 146, and lysine 155 each bind NAD(+). 3 residues coordinate Zn(2+): glutamate 188, histidine 253, and histidine 269.

It belongs to the sugar phosphate cyclases superfamily. Dehydroquinate synthase family. Requires Co(2+) as cofactor. The cofactor is Zn(2+). NAD(+) is required as a cofactor.

Its subcellular location is the cytoplasm. It carries out the reaction 7-phospho-2-dehydro-3-deoxy-D-arabino-heptonate = 3-dehydroquinate + phosphate. Its pathway is metabolic intermediate biosynthesis; chorismate biosynthesis; chorismate from D-erythrose 4-phosphate and phosphoenolpyruvate: step 2/7. Its function is as follows. Catalyzes the conversion of 3-deoxy-D-arabino-heptulosonate 7-phosphate (DAHP) to dehydroquinate (DHQ). In Corynebacterium glutamicum (strain R), this protein is 3-dehydroquinate synthase.